Reading from the N-terminus, the 190-residue chain is MAGERERGGRDRKEREERDSEFVDKLVHINRVAKVVKGGKRFGFAALVVIGDQKGRVGFGHGKAREVPEAIRKATDSAKRNLTRVALREGRTLHHDIFGRHGAGRVYLRAAPAGTGIIAGGPMRAVFETLGIQDVVAKSIGSSNPYNMVRATFNALKHQDSPRSVAARRNIKVSTLQARRVGGDAEAAAD.

The S5 DRBM domain occupies 22–85 (FVDKLVHINR…DSAKRNLTRV (64 aa)).

This sequence belongs to the universal ribosomal protein uS5 family. As to quaternary structure, part of the 30S ribosomal subunit. Contacts proteins S4 and S8.

Its function is as follows. With S4 and S12 plays an important role in translational accuracy. Functionally, located at the back of the 30S subunit body where it stabilizes the conformation of the head with respect to the body. This Bradyrhizobium sp. (strain BTAi1 / ATCC BAA-1182) protein is Small ribosomal subunit protein uS5.